We begin with the raw amino-acid sequence, 383 residues long: Acetylornithine deacetylase (383 aa).

Residue His-80 coordinates Zn(2+). Asp-82 is an active-site residue. Zn(2+) is bound at residue Asp-112. Glu-144 is an active-site residue. Positions 145, 169, and 355 each coordinate Zn(2+).

The protein belongs to the peptidase M20A family. ArgE subfamily. Homodimer. Requires Zn(2+) as cofactor. It depends on Co(2+) as a cofactor. The cofactor is glutathione.

The protein resides in the cytoplasm. The catalysed reaction is N(2)-acetyl-L-ornithine + H2O = L-ornithine + acetate. It participates in amino-acid biosynthesis; L-arginine biosynthesis; L-ornithine from N(2)-acetyl-L-ornithine (linear): step 1/1. Functionally, catalyzes the hydrolysis of the amide bond of N(2)-acetylated L-amino acids. Cleaves the acetyl group from N-acetyl-L-ornithine to form L-ornithine, an intermediate in L-arginine biosynthesis pathway, and a branchpoint in the synthesis of polyamines. The sequence is that of Acetylornithine deacetylase from Escherichia coli O8 (strain IAI1).